The primary structure comprises 317 residues: Melanocyte-stimulating hormone receptor (317 aa).

Topologically, residues Met-1 to Glu-37 are extracellular. Residue Asn-29 is glycosylated (N-linked (GlcNAc...) asparagine). Residues Val-38–Ile-63 form a helical membrane-spanning segment. Residues Ala-64–Ser-72 lie on the Cytoplasmic side of the membrane. Residues Met-73–Leu-93 traverse the membrane as a helical segment. Residues Glu-94–Asn-118 lie on the Extracellular side of the membrane. A helical membrane pass occupies residues Thr-119–Val-140. Residues Asp-141–Arg-163 lie on the Cytoplasmic side of the membrane. Residues Ala-164–Tyr-183 traverse the membrane as a helical segment. Residues Asp-184–Cys-191 are Extracellular-facing. The helical transmembrane segment at Leu-192–Leu-211 threads the bilayer. Topologically, residues Ala-212–Ala-240 are cytoplasmic. A helical membrane pass occupies residues Ala-241–Phe-266. The Extracellular portion of the chain corresponds to Cys-267–Asn-279. Residues Phe-280–Phe-300 form a helical membrane-spanning segment. The Cytoplasmic portion of the chain corresponds to Arg-301–Trp-317. Cys-315 carries S-palmitoyl cysteine lipidation.

It belongs to the G-protein coupled receptor 1 family. Interacts with MGRN1, but does not undergo MGRN1-mediated ubiquitination; this interaction competes with GNAS-binding and thus inhibits agonist-induced cAMP production. Interacts with OPN3; the interaction results in a decrease in MC1R-mediated cAMP signaling and ultimately a decrease in melanin production in melanocytes.

The protein localises to the cell membrane. Its function is as follows. Receptor for MSH (alpha, beta and gamma) and ACTH. The activity of this receptor is mediated by G proteins which activate adenylate cyclase. Mediates melanogenesis, the production of eumelanin (black/brown) and phaeomelanin (red/yellow), via regulation of cAMP signaling in melanocytes. The sequence is that of Melanocyte-stimulating hormone receptor (MC1R) from Saguinus midas (Golden-handed tamarin).